The primary structure comprises 245 residues: E3 ubiquitin-protein ligase RNF138 (245 aa).

Alanine 2 is modified (N-acetylalanine). The RING-type zinc-finger motif lies at cysteine 18–arginine 58. Cysteine 86, cysteine 89, histidine 101, and cysteine 105 together coordinate Zn(2+). The C2HC RNF-type zinc-finger motif lies at cysteine 86–cysteine 105. The interval valine 128 to glycine 153 is disordered. 2 consecutive C2H2-type zinc fingers follow at residues phenylalanine 157 to histidine 180 and valine 187 to histidine 215. In terms of domain architecture, UIM spans leucine 225–valine 243.

Interacts with NLK. Interacts with XRCC5/Ku80. Interacts with RBBP8/CtIP. Post-translationally, auto-ubiquitinated.

It localises to the chromosome. The catalysed reaction is S-ubiquitinyl-[E2 ubiquitin-conjugating enzyme]-L-cysteine + [acceptor protein]-L-lysine = [E2 ubiquitin-conjugating enzyme]-L-cysteine + N(6)-ubiquitinyl-[acceptor protein]-L-lysine.. Its pathway is protein modification; protein ubiquitination. Its function is as follows. E3 ubiquitin-protein ligase involved in DNA damage response by promoting DNA resection and homologous recombination. Recruited to sites of double-strand breaks following DNA damage and specifically promotes double-strand break repair via homologous recombination. Two different, non-exclusive, mechanisms have been proposed. According to a report, regulates the choice of double-strand break repair by favoring homologous recombination over non-homologous end joining (NHEJ): acts by mediating ubiquitination of XRCC5/Ku80, leading to remove the Ku complex from DNA breaks, thereby promoting homologous recombination. According to another report, cooperates with UBE2Ds E2 ubiquitin ligases (UBE2D1, UBE2D2, UBE2D3 or UBE2D4) to promote homologous recombination by mediating ubiquitination of RBBP8/CtIP. Together with NLK, involved in the ubiquitination and degradation of TCF/LEF. Also exhibits auto-ubiquitination activity in combination with UBE2K. May act as a negative regulator in the Wnt/beta-catenin-mediated signaling pathway. This Bos taurus (Bovine) protein is E3 ubiquitin-protein ligase RNF138 (RNF138).